The primary structure comprises 291 residues: MAMRQCAIYGKGGIGKSTTTQNLVAALAEMGKKVMIVGCDPKADSTRLILHSKAQNTIMEMAAEAGTVEDLELEDVLKVGYGGVKCVESGGPEPGVGCAGRGVITAINFLEEEGAYEDDLDFVFYDVLGDVVCGGFAMPIRENKAQEIYIVCSGEMMAMYAANNISKGIVKYANSGSVRLGGLICNSRNTDREDELIIALAAKLGTQMIHFVPRDNVVQRAEIRRMTVIEYDPTAKQADEYRTLARKVVENKMLIIPNPITMDELEALLMEFGVMEEEDESIVGKAAAAEE.

10-17 serves as a coordination point for ATP; it reads GKGGIGKS. Position 98 (Cys-98) interacts with [4Fe-4S] cluster. Arg-101 carries the post-translational modification ADP-ribosylarginine; by dinitrogenase reductase ADP-ribosyltransferase. Residue Cys-133 participates in [4Fe-4S] cluster binding.

It belongs to the NifH/BchL/ChlL family. As to quaternary structure, homodimer. [4Fe-4S] cluster serves as cofactor. In terms of processing, the reversible ADP-ribosylation of Arg-101 inactivates the nitrogenase reductase and regulates nitrogenase activity.

It catalyses the reaction N2 + 8 reduced [2Fe-2S]-[ferredoxin] + 16 ATP + 16 H2O = H2 + 8 oxidized [2Fe-2S]-[ferredoxin] + 2 NH4(+) + 16 ADP + 16 phosphate + 6 H(+). Its function is as follows. The key enzymatic reactions in nitrogen fixation are catalyzed by the nitrogenase complex, which has 2 components: the iron protein (component 2) and a component 1 which is either a molybdenum-iron protein, a vanadium-iron, or an iron-iron protein. This Azotobacter chroococcum mcd 1 protein is Nitrogenase iron protein 1 (nifH1).